Consider the following 528-residue polypeptide: Folylpolyglutamate synthase (528 aa).

ATP is bound at residue 104-107; that stretch reads GKGG. Mg(2+) contacts are provided by Ser-134, Glu-208, and His-236. 2 residues coordinate ATP: Arg-351 and Asp-365.

Belongs to the folylpolyglutamate synthase family. The cofactor is a monovalent cation.

It localises to the mitochondrion inner membrane. The protein resides in the mitochondrion matrix. The protein localises to the cytoplasm. It carries out the reaction (6S)-5,6,7,8-tetrahydrofolyl-(gamma-L-Glu)(n) + L-glutamate + ATP = (6S)-5,6,7,8-tetrahydrofolyl-(gamma-L-Glu)(n+1) + ADP + phosphate + H(+). It participates in cofactor biosynthesis; tetrahydrofolylpolyglutamate biosynthesis. Functionally, catalyzes conversion of folates to polyglutamate derivatives allowing concentration of folate compounds in the cell and the intracellular retention of these cofactors, which are important substrates for most of the folate-dependent enzymes that are involved in one-carbon transfer reactions involved in purine, pyrimidine and amino acid synthesis. This is Folylpolyglutamate synthase (met-6) from Neurospora crassa (strain ATCC 24698 / 74-OR23-1A / CBS 708.71 / DSM 1257 / FGSC 987).